Here is a 196-residue protein sequence, read N- to C-terminus: ATP-dependent Clp protease proteolytic subunit (196 aa).

Ser-101 serves as the catalytic Nucleophile. The active site involves His-126.

It belongs to the peptidase S14 family. In terms of assembly, component of the chloroplastic Clp protease core complex.

It localises to the plastid. It is found in the chloroplast stroma. The enzyme catalyses Hydrolysis of proteins to small peptides in the presence of ATP and magnesium. alpha-casein is the usual test substrate. In the absence of ATP, only oligopeptides shorter than five residues are hydrolyzed (such as succinyl-Leu-Tyr-|-NHMec, and Leu-Tyr-Leu-|-Tyr-Trp, in which cleavage of the -Tyr-|-Leu- and -Tyr-|-Trp bonds also occurs).. In terms of biological role, cleaves peptides in various proteins in a process that requires ATP hydrolysis. Has a chymotrypsin-like activity. Plays a major role in the degradation of misfolded proteins. In Atropa belladonna (Belladonna), this protein is ATP-dependent Clp protease proteolytic subunit.